The chain runs to 443 residues: Two-pore potassium channel 2 (443 aa).

Over 1–144 (MANDGNGDNN…KTDQQSDSKT (144 aa)) the chain is Cytoplasmic. The disordered stretch occupies residues 67–109 (SLPIDALSQNPSTSSSATTSFSDSTDLLLPLTEPNKPVRKSKP). Positions 72 to 98 (ALSQNPSTSSSATTSFSDSTDLLLPLT) are enriched in low complexity. A helical transmembrane segment spans residues 145-165 (IVNQAVALLVVYLSLGVLIYW). An intramembrane region (pore-forming) is located at residues 181-200 (DALYFCIVTMCTIGYGDITP). A helical transmembrane segment spans residues 208 to 228 (FSIFFVLVGFGFMDILLSGMV). At 229 to 274 (TYVLDLQENYMLETARNESLNLNDRDKVRSYIIDVKKGRMRIRLKV) the chain is on the cytoplasmic side. The chain crosses the membrane as a helical span at residues 275–295 (GLALGVVVLCLGFGVLIMHFV). An intramembrane region (pore-forming) is located at residues 302 to 321 (DSFYFSVMSVTTVGYGDRAF). A helical membrane pass occupies residues 328-348 (LLAAMWLLVSTLAVARAILFL). The Cytoplasmic segment spans residues 349-443 (AESRVDKRNR…TKDLPTATSI (95 aa)). 2 EF-hand domains span residues 365–400 (LGESMSISQFLDADIDCNGCVSKAEFVIYKLKKMDK) and 404–439 (KDINPIGFQFDKLDRTNSGRITLLDLLESSTKDLPT). Aspartate 378, aspartate 380, asparagine 382, cysteine 384, glutamate 389, aspartate 417, serine 421, arginine 423, and aspartate 428 together coordinate Ca(2+).

Belongs to the two pore domain potassium channel (TC 1.A.1.7) family. As to quaternary structure, homodimer. In terms of tissue distribution, expressed in roots, stems, leaves and flowers.

Its subcellular location is the vacuole membrane. Probable voltage-independent potassium-selective tonoplast ion channel. The polypeptide is Two-pore potassium channel 2 (TPK2) (Arabidopsis thaliana (Mouse-ear cress)).